A 694-amino-acid polypeptide reads, in one-letter code: Long-chain-fatty-acid--CoA ligase 4 (694 aa).

The interval 1–21 is disordered; that stretch reads MTEQYSVAVGEAANEHETAPR. Position 269-280 (269-280) interacts with ATP; it reads YTSGSTGTPKGV. Residues 527 to 576 carry the FACS motif; the sequence is DGWFRTGDIAEWTPKGQVKIIDRKKNLVKTLNGEYIALEKLESIYRSNPY.

Belongs to the ATP-dependent AMP-binding enzyme family. Interacts with FAT1. Mg(2+) is required as a cofactor.

It localises to the lipid droplet. The enzyme catalyses a long-chain fatty acid + ATP + CoA = a long-chain fatty acyl-CoA + AMP + diphosphate. It catalyses the reaction (9Z)-hexadecenoate + ATP + CoA = (9Z)-hexadecenoyl-CoA + AMP + diphosphate. The catalysed reaction is (9Z)-octadecenoate + ATP + CoA = (9Z)-octadecenoyl-CoA + AMP + diphosphate. It carries out the reaction hexadecanoate + ATP + CoA = hexadecanoyl-CoA + AMP + diphosphate. Activates long-chain fatty acids (LCFA) by esterification of the fatty acids into metabolically active CoA-thioesters for subsequent degradation or incorporation into phospholipids. Also facilitates the transport of LCFAs into the cell, either by active transport or by decreasing the intracellular LCFA concentration. Contributes, with FAA1, to the activation of imported myristate. Also involved in long-chain base (LCB) uptake. In contrast ot LCFA uptake, LCB uptake does not require ATP, suggesting that the enzyme is directly involved in LCB uptake. Involved in the sphingolipid-to-glycerolipid metabolic pathway, converting the sphingolipid metabolite hexadecenoic acid to hexadecenoyl-CoA, which is then further converted to glycerolipids. The polypeptide is Long-chain-fatty-acid--CoA ligase 4 (FAA4) (Saccharomyces cerevisiae (strain ATCC 204508 / S288c) (Baker's yeast)).